The following is a 460-amino-acid chain: uncharacterized protein (460 aa).

Residues 6–64 (PVKKNSTYNLYITGMGTKGEGIGKINNFTIFVTGAILGEEVEVNIIKVNKNYAVGKLLN) form the TRAM domain. 4 residues coordinate [4Fe-4S] cluster: cysteine 77, cysteine 83, cysteine 86, and cysteine 163. The S-adenosyl-L-methionine site is built by glutamine 287, tyrosine 316, glutamate 337, and aspartate 385. Cysteine 412 acts as the Nucleophile in catalysis.

The protein belongs to the class I-like SAM-binding methyltransferase superfamily. RNA M5U methyltransferase family.

This is an uncharacterized protein from Clostridium tetani (strain Massachusetts / E88).